The following is a 344-amino-acid chain: Short chain dehydrogenase/reductase mfmJ (344 aa).

Residues L51, K76, D99, N126, Y213, and K217 each coordinate NADP(+). Catalysis depends on Y213, which acts as the Proton donor. K217 acts as the Lowers pKa of active site Tyr in catalysis.

This sequence belongs to the short-chain dehydrogenases/reductases (SDR) family.

In terms of biological role, short chain dehydrogenase/reductase; part of the gene cluster that mediates the biosynthesis of the phthalide-terpenoid hybrid 11'-O-desmethylfendlerol. MfmJ seems not to be involved directly in the biosynthesis of 11'-O-desmethylfendlerol and its role has still to be determined. The biosynthesis of 11'-O-desmethylfendlerol begins with the NR-PKS mfmB that forms 3,5-dimethylorsellinic acid (DMOA), which is then transformed into the phthalide 5,7-dihydroxy-4-(hydroxymethyl)-6-methylphthalide by the cytochrome P450 monooxygenase mfmA and the hydrolase mfmC. Subsequently, the methyltransferase mfmE catalyzes 7-O-methylation to yield 5-hydroxy-4-(hydroxymethyl)-7-methoxy-6-methylphthalide, which undergoes C-3 hydroxylation by the cytochrome P450 monooxygenase mfmF. The resultant cyclopolic acid (2,5-dihydroxy-4-(hydroxymethyl)-7-methoxy-6-methylphthalide) is then farnesylated by the DMATS-type prenyltransferase mfmD to afford 5-O-farnesylcyclopolic acid. Finally, the Pyr4-family terpene cyclase mfmH cyclizes the farnesyl moiety of 5-O-farnesylcyclopolic acid into a drimane-like structure, thus completing the biosynthesis of 11'-O-desmethylfendlerol. In Annulohypoxylon moriforme (Filamentous fungus), this protein is Short chain dehydrogenase/reductase mfmJ.